A 1336-amino-acid polypeptide reads, in one-letter code: Vascular endothelial growth factor receptor 1 (1336 aa).

Residues 1 to 22 form the signal peptide; that stretch reads MVSCWDTAVLPCALLGCLLLTG. Residues 23 to 758 are Extracellular-facing; that stretch reads YCSGSKLKGP…QGTSDKSNLE (736 aa). Ig-like C2-type domains lie at 32-121, 151-214, 230-327, 335-421, 429-549, 556-655, and 661-747; these read PELS…KKME, GREL…VNGH, LDVQ…TSVH, SVKH…LTAT, QIYE…RDIR, PNGF…EVLV, and PLLL…AYLT. Intrachain disulfides connect Cys53-Cys107 and Cys158-Cys207. N-linked (GlcNAc...) asparagine glycans are attached at residues Asn100, Asn164, Asn196, and Asn251. Cysteines 252 and 311 form a disulfide. Residues Asn323, Asn417, Asn474, Asn516, Asn597, Asn625, Asn666, and Asn713 are each glycosylated (N-linked (GlcNAc...) asparagine). 2 disulfides stabilise this stretch: Cys454–Cys535 and Cys577–Cys636. Cys682 and Cys731 are oxidised to a cystine. The helical transmembrane segment at 759–780 threads the bilayer; it reads LITLTCTCVAATLFWLLLTLFI. Over 781–1336 the chain is Cytoplasmic; it reads RKLKRSSSEV…SVVLYSSPPA (556 aa). In terms of domain architecture, Protein kinase spans 827–1158; that stretch reads LKLGKSLGRG…ELVEKLGDLL (332 aa). Residues 833–841 and Lys861 contribute to the ATP site; that span reads LGRGAFGKV. Position 914 is a phosphotyrosine; by autocatalysis (Tyr914). Basic and acidic residues predominate over residues 941–957; sequence KKEKLEPDLEQDQKPRL. Residues 941–982 form a disordered region; the sequence is KKEKLEPDLEQDQKPRLDSVSSSESFTSSGFQEDKSVSDVEG. Positions 959–969 are enriched in low complexity; it reads SVSSSESFTSS. Asp1022 functions as the Proton acceptor in the catalytic mechanism. A phosphotyrosine; by autocatalysis mark is found at Tyr1053, Tyr1169, Tyr1213, Tyr1242, Tyr1325, and Tyr1331. Positions 1304-1326 are disordered; the sequence is RQEDEDDPELGKESCCSPPPDYN.

Belongs to the protein kinase superfamily. Tyr protein kinase family. CSF-1/PDGF receptor subfamily. Interacts with VEGFA, VEGFB and PGF. Monomer in the absence of bound VEGFA, VEGFB or PGF. Homodimer in the presence of bound VEGFA, VEGFB and PGF. Can also form a heterodimer with KDR. Interacts (tyrosine phosphorylated) with CBL, CRK, GRB2, NCK1, PIK3R1, PLCG, PSEN1 and PTPN11. Probably interacts with PTPRB. Interacts with RACK1. Identified in a complex with CBL and CD2AP. In terms of processing, N-glycosylated. Post-translationally, ubiquitinated after VEGFA-mediated autophosphorylation, leading to proteolytic degradation. Autophosphorylated on tyrosine residues upon ligand binding. Autophosphorylation occurs in trans, i.e. one subunit of the dimeric receptor phosphorylates tyrosine residues on the other subunit. Phosphorylation at Tyr-1169 is important for interaction with PLCG. Phosphorylation at Tyr-1213 is important for interaction with PIK3R1, PTPN11, GRB2, and PLCG. Phosphorylation at Tyr-1331 is important for endocytosis and for interaction with CBL, NCK1 and CRK. Is probably dephosphorylated by PTPRB.

It localises to the cell membrane. It is found in the endosome. It carries out the reaction L-tyrosyl-[protein] + ATP = O-phospho-L-tyrosyl-[protein] + ADP + H(+). Present in an inactive conformation in the absence of bound ligand. Binding of VEGFA, VEGFB or PGF leads to dimerization and activation by autophosphorylation on tyrosine residues. Tyrosine-protein kinase that acts as a cell-surface receptor for VEGFA, VEGFB and PGF, and plays an essential role in the development of embryonic vasculature, the regulation of angiogenesis, cell survival, cell migration, macrophage function, chemotaxis, and cancer cell invasion. Acts as a positive regulator of postnatal retinal hyaloid vessel regression. May play an essential role as a negative regulator of embryonic angiogenesis by inhibiting excessive proliferation of endothelial cells. Can promote endothelial cell proliferation, survival and angiogenesis in adulthood. Its function in promoting cell proliferation seems to be cell-type specific. Promotes PGF-mediated proliferation of endothelial cells, and proliferation of some types of cancer cells, but does not promote proliferation of normal fibroblasts. Has very high affinity for VEGFA and relatively low protein kinase activity; may function as a negative regulator of VEGFA signaling by limiting the amount of free VEGFA and preventing its binding to KDR. Modulates KDR signaling by forming heterodimers with KDR. Ligand binding leads to the activation of several signaling cascades. Activation of PLCG leads to the production of the cellular signaling molecules diacylglycerol and inositol 1,4,5-trisphosphate and the activation of protein kinase C. Mediates phosphorylation of PIK3R1, the regulatory subunit of phosphatidylinositol 3-kinase, leading to the activation of phosphatidylinositol kinase and the downstream signaling pathway. Mediates activation of MAPK1/ERK2, MAPK3/ERK1 and the MAP kinase signaling pathway, as well as of the AKT1 signaling pathway. Phosphorylates SRC, YES1 and PLCG, and may also phosphorylate CBL. Promotes phosphorylation of AKT1 and PTK2/FAK1. The chain is Vascular endothelial growth factor receptor 1 (Flt1) from Rattus norvegicus (Rat).